A 200-amino-acid polypeptide reads, in one-letter code: 3-isopropylmalate dehydratase small subunit (200 aa).

It belongs to the LeuD family. LeuD type 1 subfamily. As to quaternary structure, heterodimer of LeuC and LeuD.

It catalyses the reaction (2R,3S)-3-isopropylmalate = (2S)-2-isopropylmalate. Its pathway is amino-acid biosynthesis; L-leucine biosynthesis; L-leucine from 3-methyl-2-oxobutanoate: step 2/4. In terms of biological role, catalyzes the isomerization between 2-isopropylmalate and 3-isopropylmalate, via the formation of 2-isopropylmaleate. The polypeptide is 3-isopropylmalate dehydratase small subunit (Pectobacterium atrosepticum (strain SCRI 1043 / ATCC BAA-672) (Erwinia carotovora subsp. atroseptica)).